The following is a 115-amino-acid chain: Protein Diedel (115 aa).

The N-terminal stretch at 1-24 is a signal peptide; that stretch reads MASPVVSLLLVGICALAFVHVARS. Disulfide bonds link C26/C81, C27/C87, C42/C55, C60/C71, and C76/C83.

The protein belongs to the Diedel family. Detected in hemolymph (at protein level). Also expressed in the fat body and is probably synthesized in the fat body and secreted into the hemolymph.

It is found in the secreted. Cytokine which promotes survival following infection by Sindbis virus by suppressing the immune deficiency pathway. Following infection by the enteropathogenic bacteria E.carotovora limits intestinal stem cells proliferation. When secreted from muscle or adipose tissue, can attenuate age-related intestinal tissue degeneration by inhibiting apoptosis. The polypeptide is Protein Diedel (Drosophila melanogaster (Fruit fly)).